The primary structure comprises 133 residues: MTLNLRVMAPNRTVWTSEAQEIILSSNSGQIGILPNHAPLLTALDIGVMKVRIDSKWTAVALMGGFAQIENNQMTILVNEAEKASDIDPKEAQEAFDLAETSFNQAVGRKQTIEANLAFKRAKARLEAVNAKY.

It belongs to the ATPase epsilon chain family. As to quaternary structure, F-type ATPases have 2 components, CF(1) - the catalytic core - and CF(0) - the membrane proton channel. CF(1) has five subunits: alpha(3), beta(3), gamma(1), delta(1), epsilon(1). CF(0) has three main subunits: a, b and c.

The protein resides in the plastid. It is found in the chloroplast thylakoid membrane. Functionally, produces ATP from ADP in the presence of a proton gradient across the membrane. This is ATP synthase epsilon chain, chloroplastic from Zygnema circumcarinatum (Green alga).